Consider the following 888-residue polypeptide: Tyrosine-protein kinase receptor UFO (888 aa).

The first 18 residues, 1-18, serve as a signal peptide directing secretion; it reads MGRVPLAWWLALCCWGCA. An interaction with GAS6 region spans residues 19-86; the sequence is AHKDTQTEAG…QTQVPLGEDW (68 aa). Topologically, residues 19–445 are extracellular; sequence AHKDTQTEAG…PPRAFSWPWW (427 aa). Ig-like C2-type domains lie at 30 to 122 and 133 to 216; these read PFVG…TFVS and PYFL…ATIT. Asparagine 37 carries an N-linked (GlcNAc...) asparagine glycan. A disulfide bond links cysteine 50 and cysteine 111. Residues asparagine 151 and asparagine 192 are each glycosylated (N-linked (GlcNAc...) asparagine). Cysteine 154 and cysteine 199 are disulfide-bonded. Fibronectin type-III domains are found at residues 221 to 325 and 330 to 422; these read RPHH…TTEG and PPEN…PWRP. 3 N-linked (GlcNAc...) asparagine glycosylation sites follow: asparagine 333, asparagine 339, and asparagine 395. Residues 446-466 traverse the membrane as a helical segment; sequence YVLLGALVAAACVLILALFLV. The Cytoplasmic segment spans residues 467 to 888; sequence HRRKKETRYG…PAPPGQEDGA (422 aa). The region spanning 530-801 is the Protein kinase domain; that stretch reads VALGKTLGEG…ELREDLENTL (272 aa). ATP-binding positions include 536–544 and lysine 561; that span reads LGEGEFGAV. The active-site Proton acceptor is aspartate 666. Residues tyrosine 697, tyrosine 773, and tyrosine 815 each carry the phosphotyrosine; by autocatalysis modification. The disordered stretch occupies residues 820-846; that stretch reads EGGSHLEPRGAAGGADPPTQPDPKDSC. The residue at position 860 (tyrosine 860) is a Phosphotyrosine; by autocatalysis. A disordered region spans residues 865–888; sequence STAPGPTLSADRGCPAPPGQEDGA.

The protein belongs to the protein kinase superfamily. Tyr protein kinase family. AXL/UFO subfamily. In terms of assembly, heterodimer and heterotetramer with ligand GAS6. Interacts with CBL, GRB2, LCK, NCK2, PIK3R1, PIK3R2, PIK3R3, PLCG1, SOCS1 and TNS2. Part of a complex including AXL, TNK2 and GRB2, in which GRB2 promotes AXL recruitment by TNK2. Monoubiquitinated upon GAS6-binding. A very small proportion of the receptor could be subjected to polyubiquitination in a very transient fashion. Post-translationally, phosphorylated at tyrosine residues by autocatalysis, which activates kinase activity. In distinct substructures of a broad spectrum of developing tissues (in the late embryogenesis). In cells forming organ capsules as well as in connective tissue structures (in adult).

It is found in the cell membrane. It catalyses the reaction L-tyrosyl-[protein] + ATP = O-phospho-L-tyrosyl-[protein] + ADP + H(+). Activated by GAS6-binding and subsequent autophosphorylation. Functionally, receptor tyrosine kinase that transduces signals from the extracellular matrix into the cytoplasm by binding growth factor GAS6 and which is thus regulating many physiological processes including cell survival, cell proliferation, migration and differentiation. Ligand binding at the cell surface induces dimerization and autophosphorylation of AXL. Following activation by ligand, AXL binds and induces tyrosine phosphorylation of PI3-kinase subunits PIK3R1, PIK3R2 and PIK3R3; but also GRB2, PLCG1, LCK and PTPN11. Other downstream substrate candidates for AXL are CBL, NCK2, SOCS1 and TNS2. Recruitment of GRB2 and phosphatidylinositol 3 kinase regulatory subunits by AXL leads to the downstream activation of the AKT kinase. GAS6/AXL signaling plays a role in various processes such as endothelial cell survival during acidification by preventing apoptosis, optimal cytokine signaling during human natural killer cell development, hepatic regeneration, gonadotropin-releasing hormone neuron survival and migration, platelet activation, or regulation of thrombotic responses. Also plays an important role in inhibition of Toll-like receptors (TLRs)-mediated innate immune response. The polypeptide is Tyrosine-protein kinase receptor UFO (Axl) (Mus musculus (Mouse)).